Consider the following 231-residue polypeptide: 5'-methylthioadenosine/S-adenosylhomocysteine nucleosidase (231 aa).

Residue Glu12 is the Proton acceptor of the active site. Substrate is bound by residues Gly78, Met153, and 174 to 175; that span reads ME. Asp198 serves as the catalytic Proton donor.

It belongs to the PNP/UDP phosphorylase family. MtnN subfamily.

It carries out the reaction S-adenosyl-L-homocysteine + H2O = S-(5-deoxy-D-ribos-5-yl)-L-homocysteine + adenine. It catalyses the reaction S-methyl-5'-thioadenosine + H2O = 5-(methylsulfanyl)-D-ribose + adenine. The catalysed reaction is 5'-deoxyadenosine + H2O = 5-deoxy-D-ribose + adenine. It participates in amino-acid biosynthesis; L-methionine biosynthesis via salvage pathway; S-methyl-5-thio-alpha-D-ribose 1-phosphate from S-methyl-5'-thioadenosine (hydrolase route): step 1/2. Catalyzes the irreversible cleavage of the glycosidic bond in both 5'-methylthioadenosine (MTA) and S-adenosylhomocysteine (SAH/AdoHcy) to adenine and the corresponding thioribose, 5'-methylthioribose and S-ribosylhomocysteine, respectively. Also cleaves 5'-deoxyadenosine, a toxic by-product of radical S-adenosylmethionine (SAM) enzymes, into 5-deoxyribose and adenine. This chain is 5'-methylthioadenosine/S-adenosylhomocysteine nucleosidase, found in Bacillus thuringiensis subsp. konkukian (strain 97-27).